The following is a 361-amino-acid chain: Lactate-binding periplasmic protein TTHA0766 (361 aa).

A signal peptide (tat-type signal) is located at residues 1-22; the sequence is MKRVSRRAFLRRLGVGVAATAA. Substrate contacts are provided by Tyr101, Asn158, and Arg178. Asn158 serves as a coordination point for Ca(2+). 3 residues coordinate Ca(2+): Asp216, Phe217, and Gln247. Residues Phe217 and 247-250 contribute to the substrate site; that span reads QPVD.

Belongs to the bacterial solute-binding protein 7 family. As to quaternary structure, homodimer. The complex comprises the extracytoplasmic solute receptor protein TTHA0766, and the two putative transmembrane proteins TTHA0767 and TTHA0768.

The protein resides in the periplasm. Part of the tripartite ATP-independent periplasmic (TRAP) transport system involved in the uptake of lactate. This protein specifically binds L-lactate. The sequence is that of Lactate-binding periplasmic protein TTHA0766 from Thermus thermophilus (strain ATCC 27634 / DSM 579 / HB8).